A 148-amino-acid chain; its full sequence is UPF0260 protein YE2365 (148 aa).

The protein belongs to the UPF0260 family.

The chain is UPF0260 protein YE2365 from Yersinia enterocolitica serotype O:8 / biotype 1B (strain NCTC 13174 / 8081).